The sequence spans 379 residues: Succinyl-diaminopimelate desuccinylase (379 aa).

Residue H70 coordinates Zn(2+). Residue D72 is part of the active site. D103 lines the Zn(2+) pocket. Residue E137 is the Proton acceptor of the active site. Positions 138, 166, and 352 each coordinate Zn(2+).

Belongs to the peptidase M20A family. DapE subfamily. In terms of assembly, homodimer. Zn(2+) serves as cofactor. Requires Co(2+) as cofactor.

The enzyme catalyses N-succinyl-(2S,6S)-2,6-diaminopimelate + H2O = (2S,6S)-2,6-diaminopimelate + succinate. It functions in the pathway amino-acid biosynthesis; L-lysine biosynthesis via DAP pathway; LL-2,6-diaminopimelate from (S)-tetrahydrodipicolinate (succinylase route): step 3/3. In terms of biological role, catalyzes the hydrolysis of N-succinyl-L,L-diaminopimelic acid (SDAP), forming succinate and LL-2,6-diaminopimelate (DAP), an intermediate involved in the bacterial biosynthesis of lysine and meso-diaminopimelic acid, an essential component of bacterial cell walls. In Shewanella sp. (strain W3-18-1), this protein is Succinyl-diaminopimelate desuccinylase.